The primary structure comprises 105 residues: Large ribosomal subunit protein uL24 (105 aa).

It belongs to the universal ribosomal protein uL24 family. As to quaternary structure, part of the 50S ribosomal subunit.

One of two assembly initiator proteins, it binds directly to the 5'-end of the 23S rRNA, where it nucleates assembly of the 50S subunit. Its function is as follows. One of the proteins that surrounds the polypeptide exit tunnel on the outside of the subunit. The sequence is that of Large ribosomal subunit protein uL24 from Parvibaculum lavamentivorans (strain DS-1 / DSM 13023 / NCIMB 13966).